We begin with the raw amino-acid sequence, 355 residues long: Blue-sensitive opsin (355 aa).

The Extracellular portion of the chain corresponds to 1 to 41 (MKSRPQEFQEDFYIPIPLDTNNITALSPFLVPQDHLGGSGI). An N-linked (GlcNAc...) asparagine glycan is attached at Asn-22. A helical transmembrane segment spans residues 42–66 (FMIMTVFMLFLFIGGTSINVLTIVC). The Cytoplasmic portion of the chain corresponds to 67 to 78 (TVQYKKLRSHLN). The helical transmembrane segment at 79–104 (YILVNLAISNLLVSTVGSFTAFVSFL) threads the bilayer. Over 105-118 (NRYFIFGPTACKIE) the chain is Extracellular. A disulfide bond links Cys-115 and Cys-192. Residues 119–138 (GFVATLGGMVSLWSLSVVAF) traverse the membrane as a helical segment. Over 139–157 (ERWLVICKPVGNFSFKGTH) the chain is Cytoplasmic. The helical transmembrane segment at 158–181 (AIIGCALTWFFALLASTPPLFGWS) threads the bilayer. Residues 182-207 (RYIPEGLQCSCGPDWYTTENKYNNES) lie on the Extracellular side of the membrane. The N-linked (GlcNAc...) asparagine glycan is linked to Asn-205. Residues 208-235 (YVMFLFCFCFGFPFTVILFCYGQLLFTL) traverse the membrane as a helical segment. Over 236–257 (KSAAKAQADSASTQKAEREVTK) the chain is Cytoplasmic. The helical transmembrane segment at 258–281 (MVVVMVMGFLVCWLPYASFALWVV) threads the bilayer. Residues 282–289 (FNRGQSFD) lie on the Extracellular side of the membrane. The helical transmembrane segment at 290-314 (LRLGTIPSCFSKASTVYNPVIYVFM) threads the bilayer. Residue Lys-301 is modified to N6-(retinylidene)lysine. The Cytoplasmic segment spans residues 315–355 (NKQFRSCMMKLIFCGKSPFGDDEEASSSSQVTQVSSVGPEK). Positions 334–355 (GDDEEASSSSQVTQVSSVGPEK) are disordered. Low complexity predominate over residues 340 to 355 (SSSSQVTQVSSVGPEK).

This sequence belongs to the G-protein coupled receptor 1 family. Opsin subfamily. Post-translationally, phosphorylated on some or all of the serine and threonine residues present in the C-terminal region. In terms of tissue distribution, the color pigments are found in the cone photoreceptor cells.

It localises to the membrane. Functionally, visual pigments are the light-absorbing molecules that mediate vision. They consist of an apoprotein, opsin, covalently linked to cis-retinal. This Psalidodon fasciatus (Banded astyanax) protein is Blue-sensitive opsin (B23).